The following is a 632-amino-acid chain: PTS system mannitol-specific EIICBA component (632 aa).

The PTS EIIC type-2 domain maps to 12–341; it reads FGRFLSNMIM…ILLKYDFNTI (330 aa). A run of 6 helical transmembrane segments spans residues 24-45, 50-70, 134-155, 165-185, 273-292, and 313-334; these read ISIFIAWGMMNALFMPLGWQPN, QLISPMIFYLLPILIGYTGGS, SLAILGILLAIISFFTIGPFIE, IQIILSYNLLPLTSIIIEPAK, LILGGMSGIFILVLLHGGLI, and FSNIISVACSFLVSFISSSILL. Positions 374–469 constitute a PTS EIIB type-2 domain; it reads KTIIVACDAG…KLVENMVFLY (96 aa). The Phosphocysteine intermediate; for EIIB activity role is filled by C380. The residue at position 380 (C380) is a Phosphocysteine; by EIIA. Residues 488 to 630 enclose the PTS EIIA type-2 domain; the sequence is FQLNEENIIL…KEALSLLTME (143 aa). The active-site Tele-phosphohistidine intermediate; for EIIA activity is H548. Position 548 is a phosphohistidine; by HPr (H548).

Homodimer. Post-translationally, an intramolecular phosphotransfer takes places between His-548 and Cys-380.

The protein resides in the cell inner membrane. It carries out the reaction D-mannitol(out) + N(pros)-phospho-L-histidyl-[protein] = D-mannitol 1-phosphate(in) + L-histidyl-[protein]. The phosphoenolpyruvate-dependent sugar phosphotransferase system (sugar PTS), a major carbohydrate active transport system, catalyzes the phosphorylation of incoming sugar substrates concomitantly with their translocation across the cell membrane. This system is involved in D-mannitol transport. This chain is PTS system mannitol-specific EIICBA component (mtlA), found in Buchnera aphidicola subsp. Acyrthosiphon pisum (strain APS) (Acyrthosiphon pisum symbiotic bacterium).